The sequence spans 480 residues: Cysteine--tRNA ligase (480 aa).

Position 29 (Cys29) interacts with Zn(2+). The short motif at 31–41 is the 'HIGH' region element; that stretch reads ITVYDYCHLGH. Zn(2+)-binding residues include Cys215, His240, and Glu244. The 'KMSKS' region signature appears at 272–276; that stretch reads KMSKS. Lys275 is a binding site for ATP.

It belongs to the class-I aminoacyl-tRNA synthetase family. In terms of assembly, monomer. Requires Zn(2+) as cofactor.

It is found in the cytoplasm. The enzyme catalyses tRNA(Cys) + L-cysteine + ATP = L-cysteinyl-tRNA(Cys) + AMP + diphosphate. The sequence is that of Cysteine--tRNA ligase from Microcystis aeruginosa (strain NIES-843 / IAM M-2473).